A 91-amino-acid chain; its full sequence is Em-like protein (91 aa).

Basic and acidic residues-rich tracts occupy residues 1 to 18 and 31 to 51; these read MEQQ…REGE and DAQE…KEQI. A disordered region spans residues 1–91; that stretch reads MEQQQDRREL…PIDESKYRHP (91 aa). Over residues 62 to 73 the composition is skewed to gly residues; that stretch reads KGGLSSAGGPGG. Basic and acidic residues predominate over residues 75 to 91; that stretch reads RASEEGRPIDESKYRHP.

It belongs to the small hydrophilic plant seed protein family.

This Picea glauca (White spruce) protein is Em-like protein.